Consider the following 567-residue polypeptide: MFS-type transporter poxA (567 aa).

A compositionally biased stretch (basic and acidic residues) spans Met-1–Lys-23. Residues Met-1 to Glu-24 form a disordered region. 10 consecutive transmembrane segments (helical) span residues Ala-35–Gly-55, Ala-77–Ala-97, Leu-108–Val-128, Gly-141–Leu-161, Ser-165–Ile-185, Trp-197–Phe-217, Leu-240–Gly-260, Ser-271–Trp-291, Ile-311–Phe-331, and Val-349–Val-369. A glycan (N-linked (GlcNAc...) asparagine) is linked at Asn-370. The next 4 membrane-spanning stretches (helical) occupy residues Thr-372–Leu-392, Ile-410–Leu-430, Leu-436–Leu-456, and Ala-515–Phe-535. The segment at Glu-547–Ala-567 is disordered.

This sequence belongs to the major facilitator superfamily. TCR/Tet family.

The protein resides in the cell membrane. Functionally, MFS-type transporter; part of the gene cluster that mediates the biosynthesis of oxaleimides, cytotoxic compounds containing an unusual disubstituted succinimide moiety. The polypeptide is MFS-type transporter poxA (Penicillium oxalicum (strain 114-2 / CGMCC 5302) (Penicillium decumbens)).